The primary structure comprises 459 residues: ATP synthase subunit beta (459 aa).

Residue 148-155 participates in ATP binding; the sequence is GGAGVGKT.

This sequence belongs to the ATPase alpha/beta chains family. F-type ATPases have 2 components, CF(1) - the catalytic core - and CF(0) - the membrane proton channel. CF(1) has five subunits: alpha(3), beta(3), gamma(1), delta(1), epsilon(1). CF(0) has three main subunits: a(1), b(2) and c(9-12). The alpha and beta chains form an alternating ring which encloses part of the gamma chain. CF(1) is attached to CF(0) by a central stalk formed by the gamma and epsilon chains, while a peripheral stalk is formed by the delta and b chains.

Its subcellular location is the cell inner membrane. The catalysed reaction is ATP + H2O + 4 H(+)(in) = ADP + phosphate + 5 H(+)(out). Functionally, produces ATP from ADP in the presence of a proton gradient across the membrane. The catalytic sites are hosted primarily by the beta subunits. This chain is ATP synthase subunit beta, found in Thiobacillus denitrificans (strain ATCC 25259 / T1).